A 154-amino-acid chain; its full sequence is Lipoprotein signal peptidase (154 aa).

2 helical membrane-spanning segments follow: residues 55-75 and 85-105; these read GQFWLFYLITVIVVAAIVIYI and AGVGLGLMLGGAIGNFLDRVF. Catalysis depends on residues D111 and D129. The helical transmembrane segment at 127–147 threads the bilayer; that stretch reads VADSALTVGVILLFVHMFFFA.

The protein belongs to the peptidase A8 family.

It localises to the cell membrane. It catalyses the reaction Release of signal peptides from bacterial membrane prolipoproteins. Hydrolyzes -Xaa-Yaa-Zaa-|-(S,diacylglyceryl)Cys-, in which Xaa is hydrophobic (preferably Leu), and Yaa (Ala or Ser) and Zaa (Gly or Ala) have small, neutral side chains.. Its pathway is protein modification; lipoprotein biosynthesis (signal peptide cleavage). In terms of biological role, this protein specifically catalyzes the removal of signal peptides from prolipoproteins. This chain is Lipoprotein signal peptidase, found in Geobacillus kaustophilus (strain HTA426).